The chain runs to 223 residues: Cytolethal distending toxin subunit A (223 aa).

An N-terminal signal peptide occupies residues Met1–Ala15. Residue Cys16 is the site of N-palmitoyl cysteine attachment. A lipid anchor (S-diacylglycerol cysteine) is attached at Cys16. The disordered stretch occupies residues Gln20 to Leu48. The interval Trp91–Tyr102 is mediates binding to target cells. The Ricin B-type lectin domain maps to His123–Leu212.

In terms of assembly, heterotrimer of 3 subunits, CdtA, CdtB and CdtC.

It localises to the cell outer membrane. Functionally, CDTs are cytotoxins which induce host cell distension, growth arrest in G2/M phase, nucleus swelling, and chromatin fragmentation in HeLa cells. CdtA, along with CdtC, probably forms a heterodimeric subunit required for the delivery of CdtB. The sequence is that of Cytolethal distending toxin subunit A (cdtA) from Haemophilus ducreyi (strain 35000HP / ATCC 700724).